We begin with the raw amino-acid sequence, 526 residues long: MAARKTKHACRIQDKRSDAERQDLDTKLAAVLESRGNANAVFDILEHLESKKEEVVQAAIRTASKLFEVMLEKRELYIGDLPAENGTLPDTYSAEDKYKMWMRHRYNSCAACILDLLQHSSFSNQELALCTLMKFIQLEGKFPLENSEWKDSYRFPRELLKFVIDNLLQEEADCTLLITRFQEYLEYDDVRYYTMTVTNDCVSRVQQKNKLVLPPVFQTNVFCLLSSINIPVEESALGNFLVTKNVNNEDWKPSKLKDHKRVFERVWMIFLKHQLSVSLYKKVLLILHESILPHMSKPTLMIDFLTAAYDVGGAISLLALNGLFILIHQHNLEYPDFYKKLYSLLEPSIFHVKYRARFFHLANMFLSSTHLPVYLVAAFAKRLARLALTAPPQVLLMIIPFICNLIRRHPACRVLIHRPSAGDLATDPYIMEEQDPAKSQALESSLWELEVLQQHYHGDVVRAANVISRPLSAQESDISGLLEISSCELYDKEMKKKKFKSVPLEYEPVRGLLGLKSDITAQHFTF.

3 helical membrane passes run 307–327 (AAYD…FILI), 358–378 (FFHL…LVAA), and 386–406 (LALT…CNLI).

Belongs to the CBF/MAK21 family.

Its subcellular location is the nucleus membrane. It localises to the nucleus. The protein resides in the nucleolus. The protein is Nucleolar complex protein 4 homolog A (noc4l-a) of Xenopus laevis (African clawed frog).